Reading from the N-terminus, the 514-residue chain is Type-2 serine--tRNA ligase (514 aa).

Alanine 313 lines the L-serine pocket. Cysteine 315 lines the Zn(2+) pocket. Arginine 344 serves as a coordination point for L-serine. Residues 344 to 346 and 355 to 356 contribute to the ATP site; these read RWE and RV. 361–363 provides a ligand contact to L-serine; sequence RGE. Residues glutamate 363 and cysteine 470 each contribute to the Zn(2+) site. Residue arginine 477 participates in ATP binding.

It belongs to the class-II aminoacyl-tRNA synthetase family. Type-2 seryl-tRNA synthetase subfamily. As to quaternary structure, homodimer. Zn(2+) serves as cofactor.

It localises to the cytoplasm. The enzyme catalyses tRNA(Ser) + L-serine + ATP = L-seryl-tRNA(Ser) + AMP + diphosphate + H(+). It catalyses the reaction tRNA(Sec) + L-serine + ATP = L-seryl-tRNA(Sec) + AMP + diphosphate + H(+). The protein operates within aminoacyl-tRNA biosynthesis; selenocysteinyl-tRNA(Sec) biosynthesis; L-seryl-tRNA(Sec) from L-serine and tRNA(Sec): step 1/1. In terms of biological role, catalyzes the attachment of serine to tRNA(Ser). Is also able to aminoacylate tRNA(Sec) with serine, to form the misacylated tRNA L-seryl-tRNA(Sec), which will be further converted into selenocysteinyl-tRNA(Sec). The chain is Type-2 serine--tRNA ligase from Methanococcus maripaludis (strain C5 / ATCC BAA-1333).